We begin with the raw amino-acid sequence, 1036 residues long: Protein smoothened (1036 aa).

Positions 1–31 (MQYLNFPRMPNIMMFLEVAILCLWVVADASA) are cleaved as a signal peptide. Topologically, residues 32-258 (SSAKFGSTTP…DDEHRQIHKL (227 aa)) are extracellular. Residues asparagine 55 and asparagine 95 are each glycosylated (N-linked (GlcNAc...) asparagine). Residues 85–206 (VRRARCYPTS…TLFPTKCTNG (122 aa)) enclose the FZ domain. Intrachain disulfides connect cysteine 90–cysteine 155, cysteine 100–cysteine 148, cysteine 139–cysteine 179, and cysteine 172–cysteine 194. N-linked (GlcNAc...) asparagine glycans are attached at residues asparagine 184, asparagine 195, and asparagine 213. Cystine bridges form between cysteine 218/cysteine 238 and cysteine 242/cysteine 320. Residues 259 to 279 (IGWAGSICLLSNLFVVSTFFI) form a helical membrane-spanning segment. The Cytoplasmic portion of the chain corresponds to 280–287 (DWKNANKY). Residues 288–308 (PAVIVFYINLCFLIACVGWLL) form a helical membrane-spanning segment. At 309–339 (QFTSGSREDIVCRKDGTLRHSEPTAGENLSC) the chain is on the extracellular side. Asparagine 336 carries an N-linked (GlcNAc...) asparagine glycan. An intrachain disulfide couples cysteine 339 to cysteine 413. Residues 340–360 (IVIFVLVYYFLTAGMVWFVFL) form a helical membrane-spanning segment. Residues 361–381 (TYAWHWRAMGHVQDRIDKKGS) are Cytoplasmic-facing. The chain crosses the membrane as a helical span at residues 382-402 (YFHLVAWSLPLVLTITTMAFS). Over 403–421 (EVDGNSIVGICFVGYINHS) the chain is Extracellular. A glycan (N-linked (GlcNAc...) asparagine) is linked at asparagine 419. A helical membrane pass occupies residues 422–442 (MRAGLLLGPLCGVILIGGYFI). Topologically, residues 443–469 (TRGMVMLFGLKHFANDIKSTSASNKIH) are cytoplasmic. Residues 470-490 (LIIMRMGVCALLTLVFILVAI) traverse the membrane as a helical segment. Residues 491–532 (ACHVTEFRHADEWAQSFRQFIICKISSVFEEKSSCRIENRPS) are Extracellular-facing. Cysteine 513 and cysteine 525 are disulfide-bonded. A helical transmembrane segment spans residues 533–553 (VGVLQLHLLCLFSSGIVMSTW). Residues 554-1036 (CWTPSSIETW…KLKMLLLPSK (483 aa)) are Cytoplasmic-facing. Residues serine 658, serine 659, serine 667, serine 670, serine 673, serine 687, serine 690, and serine 693 each carry the phosphoserine modification. Disordered stretches follow at residues 678 to 745 (HVSV…TSVE) and 870 to 902 (IKKSNESNSNRHSRNSARSQSKKSQKRHLKNPA). Basic residues predominate over residues 880–899 (RHSRNSARSQSKKSQKRHLK).

The protein belongs to the G-protein coupled receptor Fz/Smo family. In terms of assembly, interacts with cos. In terms of processing, phosphorylation by CkIalpha and PKA regulates smo accumulation at the cell surface and its signaling activity in response to hh. In terms of tissue distribution, expressed in olfactory sensory neurons (at protein level).

It localises to the cell membrane. The protein resides in the cell projection. Its subcellular location is the cilium. Functionally, segment polarity protein required for correct patterning of every segment. G protein-coupled receptor which associates with the patched protein (ptc) to transduce the hedgehog (hh) signal through the activation of an inhibitory G-protein. In the absence of hh, ptc represses the constitutive signaling activity of smo through fused (fu). Essential component of a hh-signaling pathway which regulates the Duox-dependent gut immune response to bacterial uracil; required to activate Cad99C-dependent endosome formation, norpA-dependent Ca2+ mobilization and p38 MAPK, which are essential steps in the Duox-dependent production of reactive oxygen species (ROS) in response to intestinal bacterial infection. The chain is Protein smoothened (smo) from Drosophila melanogaster (Fruit fly).